A 60-amino-acid polypeptide reads, in one-letter code: Large ribosomal subunit protein uL30 (60 aa).

It belongs to the universal ribosomal protein uL30 family. Part of the 50S ribosomal subunit.

This chain is Large ribosomal subunit protein uL30, found in Sphingopyxis alaskensis (strain DSM 13593 / LMG 18877 / RB2256) (Sphingomonas alaskensis).